Reading from the N-terminus, the 351-residue chain is Rhodopsin (351 aa).

At 1–36 (MNGTEGPFFYIPMSNATGLVRSPYDYPQYYLVPPWG) the chain is on the extracellular side. N2 and N15 each carry an N-linked (GlcNAc...) asparagine glycan. Residues 37-61 (YACLAAYMFLLILTGFPVNFLTLYV) traverse the membrane as a helical segment. Residues 62–73 (TIEHKKLRSPLN) lie on the Cytoplasmic side of the membrane. A helical membrane pass occupies residues 74 to 96 (YILLNLAVADLFMVIGGFTTTMW). The Extracellular portion of the chain corresponds to 97-110 (TSLNGYFVFGRMGC). A disulfide bridge connects residues C110 and C187. Residues 111–133 (NIEGFFATLGGEIALWSLVVLSM) form a helical membrane-spanning segment. The 'Ionic lock' involved in activated form stabilization motif lies at 134–136 (ERW). At 134 to 152 (ERWIVVCKPISNFRFGENH) the chain is on the cytoplasmic side. A helical membrane pass occupies residues 153–173 (AVMGVAFSWFMAAACAVPPLV). Topologically, residues 174 to 202 (GWSRYIPEGMQCSCGIDYYTRAEGFNNES) are extracellular. N200 is a glycosylation site (N-linked (GlcNAc...) asparagine). The helical transmembrane segment at 203 to 224 (FVIYMFVVHFTCPLTIITFCYG) threads the bilayer. The Cytoplasmic segment spans residues 225–252 (RLVCTVKEAAAQQQESETTQRAEREVTR). A helical transmembrane segment spans residues 253–274 (MVIIMFVAFLACWVPYASVAWY). At 275-286 (IFTHQGSEFGPV) the chain is on the extracellular side. A helical transmembrane segment spans residues 287 to 308 (FMTIPAFFAKSSAVYNPVIYIC). K296 is subject to N6-(retinylidene)lysine. Over 309–351 (LNKQFRHCMITTLCCGKNPFEEEEGSTTASKTEASSVCSVSPA) the chain is Cytoplasmic. 2 S-palmitoyl cysteine lipidation sites follow: C322 and C323. Residues 330–351 (EEEGSTTASKTEASSVCSVSPA) form a disordered region. The segment covering 334–351 (STTASKTEASSVCSVSPA) has biased composition (polar residues).

This sequence belongs to the G-protein coupled receptor 1 family. Opsin subfamily. In terms of processing, phosphorylated on some or all of the serine and threonine residues present in the C-terminal region. Post-translationally, contains one covalently linked retinal chromophore.

The protein resides in the membrane. It is found in the cell projection. Its subcellular location is the cilium. It localises to the photoreceptor outer segment. Its function is as follows. Photoreceptor required for image-forming vision at low light intensity. While most salt water fish species use retinal as chromophore, most freshwater fish use 3-dehydroretinal, or a mixture of retinal and 3-dehydroretinal. Light-induced isomerization of 11-cis to all-trans retinal triggers a conformational change that activates signaling via G-proteins. Subsequent receptor phosphorylation mediates displacement of the bound G-protein alpha subunit by arrestin and terminates signaling. This Sardina pilchardus (European pilchard) protein is Rhodopsin (rho).